Consider the following 157-residue polypeptide: Cyclic pyranopterin monophosphate synthase (157 aa).

Residues 74-76 (MCH) and 112-113 (ME) contribute to the substrate site. Aspartate 127 is an active-site residue.

The protein belongs to the MoaC family. Homohexamer; trimer of dimers.

The catalysed reaction is (8S)-3',8-cyclo-7,8-dihydroguanosine 5'-triphosphate = cyclic pyranopterin phosphate + diphosphate. It participates in cofactor biosynthesis; molybdopterin biosynthesis. Its function is as follows. Catalyzes the conversion of (8S)-3',8-cyclo-7,8-dihydroguanosine 5'-triphosphate to cyclic pyranopterin monophosphate (cPMP). This Syntrophomonas wolfei subsp. wolfei (strain DSM 2245B / Goettingen) protein is Cyclic pyranopterin monophosphate synthase.